We begin with the raw amino-acid sequence, 454 residues long: Bifunctional protein GlmU (454 aa).

A pyrophosphorylase region spans residues 1-227 (MTQLSVVILA…FMEVEGANNR (227 aa)). Residues 9–12 (LAAG), lysine 23, glutamine 74, 79–80 (GT), 101–103 (YGD), glycine 138, glutamate 152, asparagine 167, and asparagine 225 each bind UDP-N-acetyl-alpha-D-glucosamine. Mg(2+) is bound at residue aspartate 103. Asparagine 225 lines the Mg(2+) pocket. The tract at residues 228 to 248 (LQLAALERFYQKTQAEKLLLA) is linker. Positions 249–454 (GVRLIDQARF…QGWQRPTKKK (206 aa)) are N-acetyltransferase. UDP-N-acetyl-alpha-D-glucosamine-binding residues include arginine 331 and lysine 349. The active-site Proton acceptor is histidine 361. UDP-N-acetyl-alpha-D-glucosamine contacts are provided by tyrosine 364 and asparagine 375. Acetyl-CoA contacts are provided by residues alanine 378, 384 to 385 (NY), serine 403, alanine 421, and arginine 438.

This sequence in the N-terminal section; belongs to the N-acetylglucosamine-1-phosphate uridyltransferase family. It in the C-terminal section; belongs to the transferase hexapeptide repeat family. Homotrimer. The cofactor is Mg(2+).

It localises to the cytoplasm. The enzyme catalyses alpha-D-glucosamine 1-phosphate + acetyl-CoA = N-acetyl-alpha-D-glucosamine 1-phosphate + CoA + H(+). It catalyses the reaction N-acetyl-alpha-D-glucosamine 1-phosphate + UTP + H(+) = UDP-N-acetyl-alpha-D-glucosamine + diphosphate. Its pathway is nucleotide-sugar biosynthesis; UDP-N-acetyl-alpha-D-glucosamine biosynthesis; N-acetyl-alpha-D-glucosamine 1-phosphate from alpha-D-glucosamine 6-phosphate (route II): step 2/2. It functions in the pathway nucleotide-sugar biosynthesis; UDP-N-acetyl-alpha-D-glucosamine biosynthesis; UDP-N-acetyl-alpha-D-glucosamine from N-acetyl-alpha-D-glucosamine 1-phosphate: step 1/1. It participates in bacterial outer membrane biogenesis; LPS lipid A biosynthesis. Its function is as follows. Catalyzes the last two sequential reactions in the de novo biosynthetic pathway for UDP-N-acetylglucosamine (UDP-GlcNAc). The C-terminal domain catalyzes the transfer of acetyl group from acetyl coenzyme A to glucosamine-1-phosphate (GlcN-1-P) to produce N-acetylglucosamine-1-phosphate (GlcNAc-1-P), which is converted into UDP-GlcNAc by the transfer of uridine 5-monophosphate (from uridine 5-triphosphate), a reaction catalyzed by the N-terminal domain. The chain is Bifunctional protein GlmU from Actinobacillus pleuropneumoniae serotype 7 (strain AP76).